The primary structure comprises 1446 residues: Sister chromatid cohesion protein PDS5 homolog B (1446 aa).

An HEAT repeat occupies 383-419; it reads LLVNDHLLNFVRERTLDKRWRVRKEAMMGLAQIYKKY. Lysine 1136 is modified (N6-acetyllysine). The span at 1137 to 1155 shows a compositional bias: polar residues; that stretch reads PLSSAGKQSQTKSSRMETV. Residues 1137–1446 are disordered; that stretch reads PLSSAGKQSQ…RRRSSKRERR (310 aa). Serine 1140, serine 1162, serine 1166, serine 1176, serine 1182, and serine 1191 each carry phosphoserine. The segment covering 1156-1167 has biased composition (low complexity); sequence SNASSSSNPSSP. A compositionally biased stretch (basic and acidic residues) spans 1172 to 1184; sequence GRLDSSEMDHSEN. Basic and acidic residues-rich tracts occupy residues 1196-1212 and 1223-1241; these read KKSD…LEKP and PEEK…EQKP. Over residues 1243 to 1252 the composition is skewed to basic residues; the sequence is GSQRGRKRGR. The segment at residues 1247–1259 is a DNA-binding region (a.T hook 1); the sequence is GRKRGRTASDSDE. Position 1253 is a phosphothreonine (threonine 1253). 2 positions are modified to phosphoserine: serine 1255 and serine 1257. The span at 1263 to 1272 shows a compositional bias: basic and acidic residues; that stretch reads PEEKRHKEEL. The residue at position 1281 (serine 1281) is a Phosphoserine. A DNA-binding region (a.T hook 2) is located at residues 1285 to 1297; that stretch reads KGKRGRPPKPLGG. Basic residues-rich tracts occupy residues 1308–1317 and 1339–1351; these read TSKKGNKKKL and SKSK…KRAQ. Positions 1353–1370 are enriched in polar residues; sequence RAESPETSAVESTQSTPQ. 2 positions are modified to phosphoserine: serine 1356 and serine 1364. At threonine 1365 the chain carries Phosphothreonine. Phosphoserine is present on serine 1367. Threonine 1368 bears the Phosphothreonine mark. Residues 1370-1382 constitute a DNA-binding region (a.T hook 3); sequence QKGRGRPSKAPSP. 3 positions are modified to phosphoserine: serine 1381, serine 1415, and serine 1418. A compositionally biased stretch (acidic residues) spans 1421–1431; it reads TTQEGAEEEDI. The segment covering 1436 to 1446 has biased composition (basic residues); the sequence is VRRRSSKRERR.

Belongs to the PDS5 family. As to quaternary structure, interacts with the cohesin complex. Interacts with RAD21; the interaction is direct. Interacts with WAPL (via FGF motifs) or CDCA5 (via the FGF motif); the interaction is direct, cohesin-dependent and competitive. As to expression, expressed in prostate.

It is found in the nucleus. Its function is as follows. Regulator of sister chromatid cohesion in mitosis which may stabilize cohesin complex association with chromatin. May couple sister chromatid cohesion during mitosis to DNA replication. Cohesion ensures that chromosome partitioning is accurate in both meiotic and mitotic cells and plays an important role in DNA repair. Plays a role in androgen-induced proliferative arrest in prostate cells. This chain is Sister chromatid cohesion protein PDS5 homolog B (Pds5b), found in Mus musculus (Mouse).